We begin with the raw amino-acid sequence, 444 residues long: U-box domain-containing protein 31 (444 aa).

The U-box domain maps to 59 to 133 (EIPSVFICPI…YTWFSQKYVL (75 aa)). ARM repeat units lie at residues 301-340 (KQVR…SLCL) and 343-382 (EGRI…SVCK).

It carries out the reaction S-ubiquitinyl-[E2 ubiquitin-conjugating enzyme]-L-cysteine + [acceptor protein]-L-lysine = [E2 ubiquitin-conjugating enzyme]-L-cysteine + N(6)-ubiquitinyl-[acceptor protein]-L-lysine.. It functions in the pathway protein modification; protein ubiquitination. Its function is as follows. Functions as an E3 ubiquitin ligase. In Arabidopsis thaliana (Mouse-ear cress), this protein is U-box domain-containing protein 31 (PUB31).